Reading from the N-terminus, the 1010-residue chain is MSQAFNLVLFTEIKQAQNVKTGNDKEPNSKLRAIVRISERSSKKTPRATPRDDFVYTWNSTISLKLRSQLKLPLIQISVWDKQAHRSVYVGEVRFFLIGLLKSLAYNEHTSSWESTPQWYQLYSSEDKKSFSSGTILVQFRVQQHLSKKNLFFNAKSDVTLSDQTGSSDLLNQYIQAIETSTPRSLQKKAFDLSNPNEQRFYPDIETNALASSILDCEIDSMLEDFTYRKPNITESSLHDDTLTDTDFESIHSDPTIPSSALVPKRILFIEILSVTDLPPYKSFTRATFDMDPFVVISFGKRTYRTSWRKHTLTPVFNERLAFEVCDYEKNYDLQFSVLDKDKFSFHDQVATGFVSVSELLEEKTTDKPCTDFKPTSSNLILLDKPMNANESADNLLDTKKKKYKRNVNTDATLQGGLLRKYELVMSLDGKKNWSRKTKDEYIPILKFNTRFERYEILRRQLWMHLLQGNDTQMKGTLDLIELNYFVDCLGSNLSDKTLASFFEYYDKNPWVGETLTIEQVIDSLERLVFKRQCANTHENYIINIDTCPLCGQGRLSLRQDLDILKHLSICASRDWSTVNKVLKPSFVSSKAATRRWYSRLLIKLTFGQYTLGGNSANILIQDRDTGYILEEKMNIHVRLGIKLLYKSFDKANSRKIKTLLRKLSIRQGIKFDSPSSVSQIPSFIKFHKLDVDDCLLQLDEYKTFNEFFYRKLKPGSRPQEDENNSNIATSPADCRCTVFESITFAKTFWIKGRNFTTKKLFGSFYSREMADLYDECSIGIFRLAPQDYHRFHSPVTGTVGKVQSISGEYFTVNPMAIRSDLDVFGENVRCLLPIQTKEFGRVLVVPVGAMMVGSIILSVKENQEVKKGDELGYFKFGGSTLLVLFPNKRFKFDSDLLANSNNKIETLIKVGMSIGHTPEEPQFERHYRSFEEEPVDQQLRIIRCITGGSTFEESKQATQRRNELLGNEGSPQEKDLQVENLSWEAKNMNLEELEENESLLLYDLVNDGT.

C2 domains are found at residues 1–114 and 247–370; these read MSQA…SSWE and DFES…DKPC. The Ca(2+) site is built by Asp-342, Ser-345, and Asp-348. The EF-hand domain maps to 458-493; that stretch reads LRRQLWMHLLQGNDTQMKGTLDLIELNYFVDCLGSN. Catalysis depends on charge relay system; for autoendoproteolytic cleavage activity residues Asp-734, His-793, and Ser-880. Ser-880 acts as the Schiff-base intermediate with substrate; via pyruvic acid; for decarboxylase activity in catalysis. The residue at position 880 (Ser-880) is a Pyruvic acid (Ser); by autocatalysis.

This sequence belongs to the phosphatidylserine decarboxylase family. PSD-B subfamily. Eukaryotic type II sub-subfamily. In terms of assembly, heterodimer of a large membrane-associated beta subunit and a small pyruvoyl-containing alpha subunit. Interacts with pstB2. This interaction may be a means to structurally tether the donor membrane (ER) harboring PstB2 to acceptor membranes (Golgi/endosomes) harboring PSD2 during PtdSer transport to the site of PtdEtn synthesis. It depends on pyruvate as a cofactor. Ca(2+) serves as cofactor. Is synthesized initially as an inactive proenzyme. Formation of the active enzyme involves a self-maturation process in which the active site pyruvoyl group is generated from an internal serine residue via an autocatalytic post-translational modification. Two non-identical subunits are generated from the proenzyme in this reaction, and the pyruvate is formed at the N-terminus of the alpha chain, which is derived from the carboxyl end of the proenzyme. The autoendoproteolytic cleavage occurs by a canonical serine protease mechanism, in which the side chain hydroxyl group of the serine supplies its oxygen atom to form the C-terminus of the beta chain, while the remainder of the serine residue undergoes an oxidative deamination to produce ammonia and the pyruvoyl prosthetic group on the alpha chain. During this reaction, the Ser that is part of the protease active site of the proenzyme becomes the pyruvoyl prosthetic group, which constitutes an essential element of the active site of the mature decarboxylase.

It is found in the golgi apparatus membrane. The protein localises to the endosome membrane. The enzyme catalyses a 1,2-diacyl-sn-glycero-3-phospho-L-serine + H(+) = a 1,2-diacyl-sn-glycero-3-phosphoethanolamine + CO2. It functions in the pathway phospholipid metabolism; phosphatidylethanolamine biosynthesis; phosphatidylethanolamine from CDP-diacylglycerol: step 2/2. Its function is as follows. Catalyzes the formation of phosphatidylethanolamine (PtdEtn) from phosphatidylserine (PtdSer). Plays a central role in phospholipid metabolism and in the interorganelle trafficking of phosphatidylserine. In Komagataella phaffii (strain GS115 / ATCC 20864) (Yeast), this protein is Phosphatidylserine decarboxylase proenzyme 2.